A 362-amino-acid polypeptide reads, in one-letter code: UDP-N-acetylglucosamine--N-acetylmuramyl-(pentapeptide) pyrophosphoryl-undecaprenol N-acetylglucosamine transferase (362 aa).

UDP-N-acetyl-alpha-D-glucosamine contacts are provided by residues 14-16, arginine 170, serine 199, and glutamine 289; that span reads TGG.

The protein belongs to the glycosyltransferase 28 family. MurG subfamily.

The protein localises to the cell inner membrane. It carries out the reaction di-trans,octa-cis-undecaprenyl diphospho-N-acetyl-alpha-D-muramoyl-L-alanyl-D-glutamyl-meso-2,6-diaminopimeloyl-D-alanyl-D-alanine + UDP-N-acetyl-alpha-D-glucosamine = di-trans,octa-cis-undecaprenyl diphospho-[N-acetyl-alpha-D-glucosaminyl-(1-&gt;4)]-N-acetyl-alpha-D-muramoyl-L-alanyl-D-glutamyl-meso-2,6-diaminopimeloyl-D-alanyl-D-alanine + UDP + H(+). It participates in cell wall biogenesis; peptidoglycan biosynthesis. Its function is as follows. Cell wall formation. Catalyzes the transfer of a GlcNAc subunit on undecaprenyl-pyrophosphoryl-MurNAc-pentapeptide (lipid intermediate I) to form undecaprenyl-pyrophosphoryl-MurNAc-(pentapeptide)GlcNAc (lipid intermediate II). In Borrelia turicatae (strain 91E135), this protein is UDP-N-acetylglucosamine--N-acetylmuramyl-(pentapeptide) pyrophosphoryl-undecaprenol N-acetylglucosamine transferase.